We begin with the raw amino-acid sequence, 498 residues long: Glycerol kinase (498 aa).

Thr-12 contributes to the ADP binding site. The ATP site is built by Thr-12, Thr-13, and Ser-14. Thr-12 is a sn-glycerol 3-phosphate binding site. An ADP-binding site is contributed by Arg-16. Arg-82, Glu-83, Tyr-134, and Asp-244 together coordinate sn-glycerol 3-phosphate. Residues Arg-82, Glu-83, Tyr-134, Asp-244, and Gln-245 each contribute to the glycerol site. Residues Thr-266 and Gly-309 each coordinate ADP. ATP is bound by residues Thr-266, Gly-309, Gln-313, and Gly-410. Residues Gly-410 and Asn-414 each contribute to the ADP site.

This sequence belongs to the FGGY kinase family. Homotetramer and homodimer (in equilibrium).

The enzyme catalyses glycerol + ATP = sn-glycerol 3-phosphate + ADP + H(+). Its pathway is polyol metabolism; glycerol degradation via glycerol kinase pathway; sn-glycerol 3-phosphate from glycerol: step 1/1. Activated by phosphorylation and inhibited by fructose 1,6-bisphosphate (FBP). Key enzyme in the regulation of glycerol uptake and metabolism. Catalyzes the phosphorylation of glycerol to yield sn-glycerol 3-phosphate. The protein is Glycerol kinase of Natranaerobius thermophilus (strain ATCC BAA-1301 / DSM 18059 / JW/NM-WN-LF).